The following is a 372-amino-acid chain: Peroxisomal biogenesis factor 3 (372 aa).

Topologically, residues 1–15 (MLRSMWNFLKRHKKK) are cytoplasmic. Positions 1 to 45 (MLRSMWNFLKRHKKKCIFLGTVLGGVYILGKYGQKKLREIQEREA) are targeting to peroxisomes. The chain crosses the membrane as a helical span at residues 16–36 (CIFLGTVLGGVYILGKYGQKK). Over 37 to 116 (LREIQEREAA…LKIISFTRSI (80 aa)) the chain is Peroxisomal. A helical membrane pass occupies residues 117-140 (VAVYSTCMLVVLLRVQLNIIGGYI). An interaction with PEX19 region spans residues 120–136 (YSTCMLVVLLRVQLNII). The Cytoplasmic segment spans residues 141–372 (YLDNATVGKN…AFSTPQQLEK (232 aa)).

The protein belongs to the peroxin-3 family. Interacts with PEX19.

The protein resides in the peroxisome membrane. Involved in peroxisome biosynthesis and integrity. Assembles membrane vesicles before the matrix proteins are translocated. As a docking factor for PEX19, is necessary for the import of peroxisomal membrane proteins in the peroxisomes. This chain is Peroxisomal biogenesis factor 3 (Pex3), found in Rattus norvegicus (Rat).